Reading from the N-terminus, the 588-residue chain is Proteasome-associated ATPase (588 aa).

A compositionally biased stretch (basic and acidic residues) spans 1–10; the sequence is MAAHDDDMNR. The interval 1–23 is disordered; it reads MAAHDDDMNRGIRPGRGSDDPAG. Residues 47-94 adopt a coiled-coil conformation; that stretch reads RILEERIVELQTNLAGVSAQNERLANTLREARDQIVALKEEVDRLAQP. 276 to 281 provides a ligand contact to ATP; that stretch reads GCGKTL. The segment at 587–588 is docks into pockets in the proteasome alpha-ring; that stretch reads YL.

The protein belongs to the AAA ATPase family. In terms of assembly, homohexamer. Assembles into a hexameric ring structure that caps the 20S proteasome core. Strongly interacts with the prokaryotic ubiquitin-like protein Pup through a hydrophobic interface; the interacting region of ARC lies in its N-terminal coiled-coil domain. There is one Pup binding site per ARC hexamer ring. Upon ATP-binding, the C-terminus of ARC interacts with the alpha-rings of the proteasome core, possibly by binding to the intersubunit pockets.

It participates in protein degradation; proteasomal Pup-dependent pathway. In terms of biological role, ATPase which is responsible for recognizing, binding, unfolding and translocation of pupylated proteins into the bacterial 20S proteasome core particle. May be essential for opening the gate of the 20S proteasome via an interaction with its C-terminus, thereby allowing substrate entry and access to the site of proteolysis. Thus, the C-termini of the proteasomal ATPase may function like a 'key in a lock' to induce gate opening and therefore regulate proteolysis. The polypeptide is Proteasome-associated ATPase (Streptomyces avermitilis (strain ATCC 31267 / DSM 46492 / JCM 5070 / NBRC 14893 / NCIMB 12804 / NRRL 8165 / MA-4680)).